The sequence spans 766 residues: BMP/retinoic acid-inducible neural-specific protein 3 (766 aa).

The N-terminal stretch at Met-1–Ala-33 is a signal peptide. Residues Arg-74–Ala-264 form the MACPF domain. N-linked (GlcNAc...) asparagine glycans are attached at residues Asn-168, Asn-337, Asn-456, Asn-562, Asn-609, and Asn-641.

This sequence belongs to the BRINP family. As to expression, expressed in the brain. Weakly expressed in embryonic stem (ES) cells. Expressed in ES-derived neural stem cells (NSCs) and neuronal cells.

Its subcellular location is the secreted. It is found in the mitochondrion. Functionally, inhibits neuronal cell proliferation by negative regulation of the cell cycle transition. Promotes pituitary gonadotrope cell proliferation, migration and invasion, when overexpressed. May play a role in cell pituitary tumor development. The chain is BMP/retinoic acid-inducible neural-specific protein 3 (Brinp3) from Mus musculus (Mouse).